The following is a 1119-amino-acid chain: Solute carrier family 38 member 10 (1119 aa).

The next 10 helical transmembrane spans lie at 4–24 (AAAS…GVSV), 36–58 (IVLG…MFLV), 84–104 (LVET…YVVI), 120–140 (VGGT…VLPL), 153–173 (FSAM…LSSL), 229–249 (IFAS…FFGY), 272–292 (MLRV…ILPC), 323–343 (ALTL…PNVE), 345–365 (ILGL…PALI), and 378–398 (VVLW…LSVS). Disordered regions lie at residues 438 to 691 (AEDG…EEAG) and 731 to 1071 (KEIH…DGVI). Composition is skewed to basic and acidic residues over residues 439–454 (EDGR…REEL), 466–475 (PGREDGKEAP), 493–522 (EAHR…ENKP), 544–559 (DSER…EVGK), and 592–603 (AKEDLGPGDRGL). Ser-612 carries the post-translational modification Phosphoserine. The span at 652–667 (PPLPAEKPAPGPGLPP) shows a compositional bias: pro residues. Composition is skewed to basic and acidic residues over residues 668-677 (EPREQRDVER), 731-752 (KEIH…EVHQ), and 763-773 (EAPEGKARETV). The residue at position 772 (Thr-772) is a Phosphothreonine. Position 802 is a phosphoserine (Ser-802). Composition is skewed to basic and acidic residues over residues 832 to 841 (KLRDGQKDAA) and 863 to 876 (PARE…RLAE). Over residues 880–889 (GQSQDVTGGS) the composition is skewed to polar residues. Residues Ser-889, Ser-965, and Ser-997 each carry the phosphoserine modification. Basic and acidic residues-rich tracts occupy residues 975 to 1005 (HRLD…RGGE), 1012 to 1022 (PRQRPEPELGL), and 1033 to 1042 (DNAKPNRDLK).

Belongs to the amino acid/polyamine transporter 2 family.

The protein resides in the membrane. The catalysed reaction is L-glutamate(out) = L-glutamate(in). The enzyme catalyses L-glutamine(out) = L-glutamine(in). It catalyses the reaction L-alanine(in) = L-alanine(out). It carries out the reaction L-serine(in) = L-serine(out). The catalysed reaction is L-leucine(in) = L-leucine(out). In terms of biological role, facilitates bidirectional transport of amino acids. May act as a glutamate sensor that regulates glutamate-glutamine cycle and mTOR signaling in the brain. The transport mechanism remains to be elucidated. In Homo sapiens (Human), this protein is Solute carrier family 38 member 10.